Consider the following 163-residue polypeptide: T-cell surface glycoprotein CD3 zeta chain (163 aa).

Positions 1 to 21 (MKWKALFTAAILQAQLPITEA) are cleaved as a signal peptide. The Extracellular portion of the chain corresponds to 22 to 30 (QSFGLLDPK). Residues 31–51 (LCYLLDGILFIYGVILTALFL) form a helical membrane-spanning segment. Residues 52–163 (RVKFSRSADA…ALHMQALPPR (112 aa)) lie on the Cytoplasmic side of the membrane. Ser58 bears the Phosphoserine mark. ITAM domains lie at 61-89 (APAY…LDKR), 99-127 (KPRR…EIGM), and 130-158 (ERRR…LHMQ). Residues Tyr64, Tyr72, Tyr83, Tyr110, Tyr122, Tyr141, and Tyr152 each carry the phosphotyrosine modification. Residues 83-98 (YDVLDKRRGRDPEMGG) show a composition bias toward basic and acidic residues. Residues 83–111 (YDVLDKRRGRDPEMGGKPRRKNPQEGLYN) form a disordered region.

It belongs to the CD3Z/FCER1G family. As to quaternary structure, the TCR-CD3 complex is composed of a CD3D/CD3E and a CD3G/CD3E heterodimers that preferentially associate with TCRalpha and TCRbeta, respectively, to form TCRalpha/CD3E/CD3G and TCRbeta/CD3G/CD3E trimers. In turn, the hexamer interacts with CD3Z homodimer to form the TCR-CD3 complex. Alternatively, TCRalpha and TCRbeta can be replaced by TCRgamma and TCRdelta. Interacts with SLA. Interacts with TRAT1. Interacts with DOCK2. Interacts with SLA2. Interacts with SHB. Interacts with ZAP70. Interacts (tyrosine phosphorylated) with SHC1 (via SH2 domain). Interacts with PTPRC. Interacts with CRK; this interaction regulates CD3Z phosphorylation. Interacts (on T cell side) with CD81, ICAM1 and CD9 at immunological synapses between antigen-presenting cells and T cells. Interacts with CD160. Interacts with LY6E. Interacts with LY6E. The signaling subunit of immunoglobulin gamma (IgG) Fc receptor complex. As a homodimer or a heterodimer with FCER1G, associates with the ligand binding subunit FCGR3A (via transmembrane domain); this interaction is a prerequisite for Fc receptor complex expression on the cell surface. Interacts with CD5. Post-translationally, phosphorylated on Tyr residues after T-cell receptor triggering by LCK in association with CD4/CD8.

The protein localises to the cell membrane. Functionally, part of the TCR-CD3 complex present on T-lymphocyte cell surface that plays an essential role in adaptive immune response. When antigen presenting cells (APCs) activate T-cell receptor (TCR), TCR-mediated signals are transmitted across the cell membrane by the CD3 chains CD3D, CD3E, CD3G and CD3Z. All CD3 chains contain immunoreceptor tyrosine-based activation motifs (ITAMs) in their cytoplasmic domain. Upon TCR engagement, these motifs become phosphorylated by Src family protein tyrosine kinases LCK and FYN, resulting in the activation of downstream signaling pathways. CD3Z ITAMs phosphorylation creates multiple docking sites for the protein kinase ZAP70 leading to ZAP70 phosphorylation and its conversion into a catalytically active enzyme. Plays an important role in intrathymic T-cell differentiation. Additionally, participates in the activity-dependent synapse formation of retinal ganglion cells (RGCs) in both the retina and dorsal lateral geniculate nucleus (dLGN). The sequence is that of T-cell surface glycoprotein CD3 zeta chain (CD247) from Sus scrofa (Pig).